Reading from the N-terminus, the 267-residue chain is MADRRNLFFFYGDDKATLVEKMKPIYRILEENGFTILDHPKNANAIVSVGDDATFLQAVRKTGFREDCLYAGISTKDEISFYCDFHIDHVDTALQEITKNEIEVRKYPTIQVDVDGSTSFHCLNEFSLRSSIIKTFVVDVHVDDLYFETFRGDGLVVSTPTGSTAYNKSLHGAVVDPLIPCFQVSELASLNNNTYRTLGSPFILNHERTLTLKLRPDGNDYPVIGMDNEALSIKQVEKAVVRLSDKQIKTVKLKNNSFWEKVQRTFL.

The active-site Proton acceptor is the D52. NAD(+) is bound by residues 52 to 53 (DA), 124 to 125 (NE), R151, D153, 164 to 169 (TAYNKS), and A188.

This sequence belongs to the NAD kinase family. It depends on a divalent metal cation as a cofactor.

Its subcellular location is the cytoplasm. It carries out the reaction NAD(+) + ATP = ADP + NADP(+) + H(+). Its function is as follows. Involved in the regulation of the intracellular balance of NAD and NADP, and is a key enzyme in the biosynthesis of NADP. Catalyzes specifically the phosphorylation on 2'-hydroxyl of the adenosine moiety of NAD to yield NADP. This Bacillus cereus (strain ATCC 14579 / DSM 31 / CCUG 7414 / JCM 2152 / NBRC 15305 / NCIMB 9373 / NCTC 2599 / NRRL B-3711) protein is NAD kinase 2.